We begin with the raw amino-acid sequence, 702 residues long: Amino-acid racemase (702 aa).

The Cytoplasmic segment spans residues 1 to 12; it reads MKHRANGIDLFR. Residues 13 to 33 form a helical membrane-spanning segment; sequence IFAATMVVAIHTFPFQSIAPF. Residues 34 to 39 lie on the Extracellular side of the membrane; that stretch reads LDEVIT. Residues 40-60 form a helical membrane-spanning segment; it reads LTVFRVAVPFFFMITGYFLLG. Topologically, residues 61–77 are cytoplasmic; that stretch reads RLSLNFSYNNNQRVKKY. Residues 78 to 98 form a helical membrane-spanning segment; it reads LYKIGMIYLYSILLYFPLSLL. Residues 99–120 lie on the Extracellular side of the membrane; it reads NGTISLKMNILLLLKVFIFDGT. A helical membrane pass occupies residues 121–141; that stretch reads FYHLWYFPASIIGTILVTLLL. Position 142 (Arg142) is a topological domain, cytoplasmic. A helical transmembrane segment spans residues 143-163; that stretch reads SIGFKLTVAFSTCLYLVGLGG. Residues 164–191 lie on the Extracellular side of the membrane; it reads DSWYGITNQVPLLNKLYTFIFSWSDYTR. The chain crosses the membrane as a helical span at residues 192–212; that stretch reads SGVFFTPVFLCLGIFAYRVSK. The Cytoplasmic segment spans residues 213–218; it reads KLTASK. A helical transmembrane segment spans residues 219–239; that stretch reads ILNLLFYVFIIGMTFESIFLH. Over 240–248 the chain is Extracellular; sequence RFTNVKHDS. A helical transmembrane segment spans residues 249–269; it reads MYLLLPSCALILFLMLLNWQP. Residues 270-276 lie on the Cytoplasmic side of the membrane; the sequence is KLKVKES. The chain crosses the membrane as a helical span at residues 277-297; that stretch reads ADLTLLVYILHPLVIVIVHSI. The Extracellular segment spans residues 298-307; that stretch reads SKYIPILKNS. The chain crosses the membrane as a helical span at residues 308-328; it reads LLNFLLVVVCSFILAQLLLNL. The Cytoplasmic segment spans residues 329-702; it reads KRKLRVSKQK…LGSRLGTELN (374 aa). Residues 337–702 form a racemase region; sequence QKIPFERASK…LGSRLGTELN (366 aa). Lys375 (proton acceptor) is an active-site residue. N6-(pyridoxal phosphate)lysine is present on Lys375. Arg469 contacts substrate. Residue Tyr601 is the Proton acceptor of the active site. Met650 lines the substrate pocket.

In the N-terminal section; belongs to the acyltransferase 3 family. It in the C-terminal section; belongs to the alanine racemase family. It depends on pyridoxal 5'-phosphate as a cofactor.

The protein localises to the cell membrane. The polypeptide is Amino-acid racemase (vanTE) (Enterococcus faecalis (Streptococcus faecalis)).